We begin with the raw amino-acid sequence, 198 residues long: Recombination protein RecR (198 aa).

The segment at 57–72 (CSVCHNITDTDPCRIC) adopts a C4-type zinc-finger fold. Positions 80-175 (SVICVVQDAK…KVTRIAHGLP (96 aa)) constitute a Toprim domain.

Belongs to the RecR family.

May play a role in DNA repair. It seems to be involved in an RecBC-independent recombinational process of DNA repair. It may act with RecF and RecO. The protein is Recombination protein RecR of Halalkalibacterium halodurans (strain ATCC BAA-125 / DSM 18197 / FERM 7344 / JCM 9153 / C-125) (Bacillus halodurans).